A 208-amino-acid polypeptide reads, in one-letter code: Methyl-CpG-binding domain protein 3-like 3 (208 aa).

This sequence belongs to the MBD3L family.

This Homo sapiens (Human) protein is Methyl-CpG-binding domain protein 3-like 3 (MBD3L3).